A 239-amino-acid polypeptide reads, in one-letter code: Ribosomal RNA small subunit methyltransferase G (239 aa).

Residues Gly-78, Phe-83, Ala-129–Glu-130, and Arg-148 each bind S-adenosyl-L-methionine.

It belongs to the methyltransferase superfamily. RNA methyltransferase RsmG family.

The protein resides in the cytoplasm. Specifically methylates the N7 position of a guanine in 16S rRNA. The protein is Ribosomal RNA small subunit methyltransferase G of Clostridium beijerinckii (strain ATCC 51743 / NCIMB 8052) (Clostridium acetobutylicum).